The sequence spans 143 residues: Meiotically up-regulated gene 128 protein (143 aa).

Has a role in meiosis. This is Meiotically up-regulated gene 128 protein (mug128) from Schizosaccharomyces pombe (strain 972 / ATCC 24843) (Fission yeast).